The sequence spans 322 residues: N-acetyl-gamma-glutamyl-phosphate reductase 2 (322 aa).

The active site involves C117.

The protein belongs to the NAGSA dehydrogenase family. Type 2 subfamily.

It is found in the cytoplasm. It catalyses the reaction N-acetyl-L-glutamate 5-semialdehyde + phosphate + NADP(+) = N-acetyl-L-glutamyl 5-phosphate + NADPH + H(+). It functions in the pathway amino-acid biosynthesis; L-arginine biosynthesis; N(2)-acetyl-L-ornithine from L-glutamate: step 3/4. In terms of biological role, catalyzes the NADPH-dependent reduction of N-acetyl-5-glutamyl phosphate to yield N-acetyl-L-glutamate 5-semialdehyde. This chain is N-acetyl-gamma-glutamyl-phosphate reductase 2, found in Nostoc sp. (strain PCC 7120 / SAG 25.82 / UTEX 2576).